The sequence spans 710 residues: Ent-copalyl diphosphate synthase 1 (710 aa).

Residue Lys-145 participates in substrate binding. Residues Asp-277 and Asp-279 each coordinate Mg(2+). The DXDD motif motif lies at 277 to 280; it reads DIDD. Lys-364 is a substrate binding site.

The protein belongs to the terpene synthase family. Tpsc subfamily. The cofactor is Mg(2+). Expressed in germinating seeds and leaves.

It catalyses the reaction (2E,6E,10E)-geranylgeranyl diphosphate = ent-copalyl diphosphate. It functions in the pathway plant hormone biosynthesis; gibberellin biosynthesis. It participates in secondary metabolite biosynthesis; terpenoid biosynthesis. In terms of biological role, involved in the biosynthesis of ent-kaurene diterpenoids natural products such as oridonin, miltiradiene, eriocalyxin B and nezukol, known to exhibit antitumor, anti-inflammatory and antibacterial activities, and in the production of gibberellins phytohormones. Catalyzes the conversion of (2E,6E,10E)-geranylgeranyl diphosphate (GGPP) to ent-copalyl diphosphate (ent-CPP). The chain is Ent-copalyl diphosphate synthase 1 from Isodon eriocalyx (Plectranthus eriocalyx).